Reading from the N-terminus, the 182-residue chain is Transcription antitermination protein NusB (182 aa).

The interval 159-182 (TPVENSEAEAAGYPVEESIEEDSQ) is disordered.

It belongs to the NusB family.

In terms of biological role, involved in transcription antitermination. Required for transcription of ribosomal RNA (rRNA) genes. Binds specifically to the boxA antiterminator sequence of the ribosomal RNA (rrn) operons. In Corynebacterium diphtheriae (strain ATCC 700971 / NCTC 13129 / Biotype gravis), this protein is Transcription antitermination protein NusB.